We begin with the raw amino-acid sequence, 502 residues long: Cytochrome P450 71B10 (502 aa).

A helical membrane pass occupies residues 1 to 21 (MTVLWFVSLILLISILLVAVK). Cys-443 is a heme binding site.

The protein belongs to the cytochrome P450 family. Heme serves as cofactor.

Its subcellular location is the membrane. The chain is Cytochrome P450 71B10 (CYP71B10) from Arabidopsis thaliana (Mouse-ear cress).